Reading from the N-terminus, the 726-residue chain is Catalase-peroxidase (726 aa).

A cross-link (tryptophyl-tyrosyl-methioninium (Trp-Tyr) (with M-242)) is located at residues 93–216 (WHSAGTYRVH…LAAVQMGLIY (124 aa)). H94 acts as the Proton acceptor in catalysis. Residues 216–242 (YVNPEGPNGNPDPVAAAVDIRETFTRM) constitute a cross-link (tryptophyl-tyrosyl-methioninium (Tyr-Met) (with W-93)). H257 serves as a coordination point for heme b. A disordered region spans residues 471-490 (GSDKRGGANGARIRLSPQKD).

This sequence belongs to the peroxidase family. Peroxidase/catalase subfamily. As to quaternary structure, homodimer or homotetramer. Heme b is required as a cofactor. Formation of the three residue Trp-Tyr-Met cross-link is important for the catalase, but not the peroxidase activity of the enzyme.

The catalysed reaction is H2O2 + AH2 = A + 2 H2O. It catalyses the reaction 2 H2O2 = O2 + 2 H2O. Bifunctional enzyme with both catalase and broad-spectrum peroxidase activity. This chain is Catalase-peroxidase, found in Methylacidiphilum infernorum (isolate V4) (Methylokorus infernorum (strain V4)).